The sequence spans 220 residues: N-(5'-phosphoribosyl)anthranilate isomerase (220 aa).

This sequence belongs to the TrpF family.

It carries out the reaction N-(5-phospho-beta-D-ribosyl)anthranilate = 1-(2-carboxyphenylamino)-1-deoxy-D-ribulose 5-phosphate. Its pathway is amino-acid biosynthesis; L-tryptophan biosynthesis; L-tryptophan from chorismate: step 3/5. The sequence is that of N-(5'-phosphoribosyl)anthranilate isomerase from Gloeothece citriformis (strain PCC 7424) (Cyanothece sp. (strain PCC 7424)).